A 316-amino-acid polypeptide reads, in one-letter code: Homoserine kinase (316 aa).

96 to 106 (PHGRGLGSSGA) lines the ATP pocket.

The protein belongs to the GHMP kinase family. Homoserine kinase subfamily.

Its subcellular location is the cytoplasm. It carries out the reaction L-homoserine + ATP = O-phospho-L-homoserine + ADP + H(+). It participates in amino-acid biosynthesis; L-threonine biosynthesis; L-threonine from L-aspartate: step 4/5. Its function is as follows. Catalyzes the ATP-dependent phosphorylation of L-homoserine to L-homoserine phosphate. The protein is Homoserine kinase of Clavibacter michiganensis subsp. michiganensis (strain NCPPB 382).